Here is a 100-residue protein sequence, read N- to C-terminus: Protein alpha-2 (100 aa).

This Bos taurus (Bovine) protein is Protein alpha-2.